Reading from the N-terminus, the 104-residue chain is MSSVPLSVYLVLALILFCIGLYGALTKRNTVIVLICIELMLNAVNINLVAFAKYGAHPGIAGQIFALFTITVAAAEAAVGLAILMALYRNRKTVHIDEIDSMKH.

A run of 3 helical transmembrane segments spans residues 4–24, 31–51, and 64–84; these read VPLSVYLVLALILFCIGLYGA, VIVLICIELMLNAVNINLVAF, and IFALFTITVAAAEAAVGLAIL.

It belongs to the complex I subunit 4L family. As to quaternary structure, NDH-1 is composed of 14 different subunits. Subunits NuoA, H, J, K, L, M, N constitute the membrane sector of the complex.

The protein resides in the cell membrane. The catalysed reaction is a quinone + NADH + 5 H(+)(in) = a quinol + NAD(+) + 4 H(+)(out). Functionally, NDH-1 shuttles electrons from NADH, via FMN and iron-sulfur (Fe-S) centers, to quinones in the respiratory chain. The immediate electron acceptor for the enzyme in this species is believed to be a menaquinone. Couples the redox reaction to proton translocation (for every two electrons transferred, four hydrogen ions are translocated across the cytoplasmic membrane), and thus conserves the redox energy in a proton gradient. In Geobacillus sp. (strain WCH70), this protein is NADH-quinone oxidoreductase subunit K.